The chain runs to 526 residues: Transcription factor MYC1 (526 aa).

Positions 330–351 are disordered; sequence MFPSQNSGLNQDDPSDRRKENE. A compositionally biased stretch (polar residues) spans 332-341; that stretch reads PSQNSGLNQD. The 50-residue stretch at 333-382 folds into the bHLH domain; it reads SQNSGLNQDDPSDRRKENEKFSVLRTMVPTVNEVDKESILNNTIKYLQEL.

In terms of assembly, homodimer. Interacts with MYB75/PAP1, MYB90/PAP2, MYB4, MYB5, MYB6, MYB23, MYB82, MYB113, MYB114, TT2, MYB0/GL1, and MYB66/WER. In terms of tissue distribution, mostly expressed in developing seeds. Also detected in stems and leaves.

It is found in the nucleus. Trancsription activator, when associated with MYB75/PAP1 or MYB90/PAP2. The polypeptide is Transcription factor MYC1 (BHLH12) (Arabidopsis thaliana (Mouse-ear cress)).